Here is a 109-residue protein sequence, read N- to C-terminus: Large ribosomal subunit protein uL22 (109 aa).

Belongs to the universal ribosomal protein uL22 family. In terms of assembly, part of the 50S ribosomal subunit.

Its function is as follows. This protein binds specifically to 23S rRNA; its binding is stimulated by other ribosomal proteins, e.g. L4, L17, and L20. It is important during the early stages of 50S assembly. It makes multiple contacts with different domains of the 23S rRNA in the assembled 50S subunit and ribosome. In terms of biological role, the globular domain of the protein is located near the polypeptide exit tunnel on the outside of the subunit, while an extended beta-hairpin is found that lines the wall of the exit tunnel in the center of the 70S ribosome. The protein is Large ribosomal subunit protein uL22 of Polaromonas naphthalenivorans (strain CJ2).